The sequence spans 243 residues: ATP synthase subunit a, chloroplastic (243 aa).

Transmembrane regions (helical) follow at residues 32–52 (GQVLLVSWFVLAVIFGLSFVG), 96–116 (TVFLFIFVSNWSGALLPWALI), 129–149 (DINTTVALALLTSISYFYAGI), 195–215 (LVVGVLVSLVPLIIPIPIMLL), and 216–236 (GCFTSAIQALVFATLAGAYIG).

It belongs to the ATPase A chain family. In terms of assembly, F-type ATPases have 2 components, CF(1) - the catalytic core - and CF(0) - the membrane proton channel. CF(1) has five subunits: alpha(3), beta(3), gamma(1), delta(1), epsilon(1). CF(0) has four main subunits: a, b, b' and c.

The protein resides in the plastid. It is found in the chloroplast thylakoid membrane. Functionally, key component of the proton channel; it plays a direct role in the translocation of protons across the membrane. The sequence is that of ATP synthase subunit a, chloroplastic from Tetradesmus obliquus (Green alga).